The following is a 270-amino-acid chain: DNA packaging protein OPG160 (270 aa).

55-62 (VYNPDYDG) contributes to the ATP binding site.

This sequence belongs to the orthopoxvirus OPG160 protein family. Interacts with protein OPG137.

In terms of biological role, participates in viral DNA packaging and virion morphogenesis. The sequence is that of DNA packaging protein OPG160 (OPG160) from Homo sapiens (Human).